A 500-amino-acid polypeptide reads, in one-letter code: Histidine--tRNA ligase (500 aa).

It belongs to the class-II aminoacyl-tRNA synthetase family. As to quaternary structure, homodimer.

It is found in the cytoplasm. It catalyses the reaction tRNA(His) + L-histidine + ATP = L-histidyl-tRNA(His) + AMP + diphosphate + H(+). This chain is Histidine--tRNA ligase (hisS), found in Mesorhizobium japonicum (strain LMG 29417 / CECT 9101 / MAFF 303099) (Mesorhizobium loti (strain MAFF 303099)).